A 238-amino-acid chain; its full sequence is Envelope glycoprotein G (238 aa).

Residues 1 to 24 (MSQGAMRAVVPIIPFLLVLVGVSG) form the signal peptide. The Virion surface portion of the chain corresponds to 25–189 (VPTNVSSTTQ…SFLTASPALD (165 aa)). Residues Asn28 and Asn49 are each glycosylated (N-linked (GlcNAc...) asparagine; by host). Polar residues-rich tracts occupy residues 28–42 (NVSSTTQPQLQTTGR) and 49–68 (NMTQTGTTDSPTAISLTTPD). The segment at 28–171 (NVSSTTQPQL…LTSKGRPLVP (144 aa)) is disordered. Acidic residues predominate over residues 78–88 (LEEEEEEEGAG). Positions 89–100 (DGEHLEGGDGTR) are enriched in basic and acidic residues. Residues 190–210 (TLFVVSTVIHTLSFLCIGAMA) form a helical membrane-spanning segment. Topologically, residues 211 to 238 (THLCGGWSRRGRRTHPSVRYVCLPSERG) are intravirion.

It belongs to the alphaherpesvirinae glycoprotein G family.

The protein resides in the virion membrane. Functionally, chemokine-binding protein that inhibits neutrophils' chemotaxis. This Human herpesvirus 1 (strain 17) (HHV-1) protein is Envelope glycoprotein G (gG).